Reading from the N-terminus, the 439-residue chain is Xylose isomerase (439 aa).

Active-site residues include H101 and D104. Mg(2+) is bound by residues E232, E268, H271, D296, D307, D309, and D339.

This sequence belongs to the xylose isomerase family. As to quaternary structure, homotetramer. It depends on Mg(2+) as a cofactor.

Its subcellular location is the cytoplasm. The enzyme catalyses alpha-D-xylose = alpha-D-xylulofuranose. In Lactococcus lactis subsp. lactis (strain IL1403) (Streptococcus lactis), this protein is Xylose isomerase (xylA).